Here is an 83-residue protein sequence, read N- to C-terminus: U5-theraphotoxin-Hs1a 3 (83 aa).

The signal sequence occupies residues 1–21 (MKTSMFLTLTGLVLLFVVCYA). Positions 22–49 (SESEEKDFPKELLSSIFAADSDFKVEER) are excised as a propeptide. Cystine bridges form between C51-C63, C56-C68, and C62-C75.

The protein belongs to the neurotoxin 10 (Hwtx-1) family. 51 (Hntx-8) subfamily. Hntx-8 sub-subfamily. In terms of tissue distribution, expressed by the venom gland.

The protein resides in the secreted. Functionally, agglutinates erythrocytes. The sequence is that of U5-theraphotoxin-Hs1a 3 from Cyriopagopus schmidti (Chinese bird spider).